The following is a 490-amino-acid chain: Serine/threonine-protein kinase BSK6 (490 aa).

Gly2 carries the N-myristoyl glycine lipid modification. The residue at position 25 (Ser25) is a Phosphoserine. Residues 56–310 form the Protein kinase domain; the sequence is DNIVSEHGEK…KSLVTSLVTL (255 aa). Residues 62 to 70 and Lys84 each bind ATP; that span reads HGEKAPNVV. The Proton acceptor role is filled by Asp178. A Phosphoserine modification is found at Ser373.

Belongs to the protein kinase superfamily. Ser/Thr protein kinase family. As to quaternary structure, interacts with BRI1, ASK7/BIN2, ASK9/BIL2, BSK1, BSK5, BSK8 and BSK11. In terms of processing, phosphorylated by BRI1, ASK7/BIN2 and ASK9/BIL2.

Its subcellular location is the cell membrane. The enzyme catalyses L-seryl-[protein] + ATP = O-phospho-L-seryl-[protein] + ADP + H(+). The catalysed reaction is L-threonyl-[protein] + ATP = O-phospho-L-threonyl-[protein] + ADP + H(+). In terms of biological role, probable serine/threonine kinase that acts as a positive regulator of brassinosteroid (BR) signaling downstream of the receptor kinase BRI1. Functions redundantly with BSK3, BSK4, BSK7 and BSK8. This Arabidopsis thaliana (Mouse-ear cress) protein is Serine/threonine-protein kinase BSK6.